The primary structure comprises 649 residues: Pesticidal crystal protein Cry3Ca (649 aa).

Residues 1 to 13 show a composition bias toward basic and acidic residues; that stretch reads MNPNNRSEHDTIK. The disordered stretch occupies residues 1-29; the sequence is MNPNNRSEHDTIKATENNEVSNNHAQYPL. Residues 14-25 are compositionally biased toward polar residues; sequence ATENNEVSNNHA.

This sequence belongs to the delta endotoxin family.

Promotes colloidosmotic lysis by binding to the midgut epithelial cells of Coleoptera. The protein is Pesticidal crystal protein Cry3Ca (cry3Ca) of Bacillus thuringiensis subsp. kurstaki.